The sequence spans 406 residues: Succinylornithine transaminase (406 aa).

Position 252 is an N6-(pyridoxal phosphate)lysine (Lys252).

This sequence belongs to the class-III pyridoxal-phosphate-dependent aminotransferase family. AstC subfamily. Pyridoxal 5'-phosphate is required as a cofactor.

It catalyses the reaction N(2)-succinyl-L-ornithine + 2-oxoglutarate = N-succinyl-L-glutamate 5-semialdehyde + L-glutamate. Its pathway is amino-acid degradation; L-arginine degradation via AST pathway; L-glutamate and succinate from L-arginine: step 3/5. Catalyzes the transamination of N(2)-succinylornithine and alpha-ketoglutarate into N(2)-succinylglutamate semialdehyde and glutamate. Can also act as an acetylornithine aminotransferase. This Escherichia coli O7:K1 (strain IAI39 / ExPEC) protein is Succinylornithine transaminase.